A 150-amino-acid polypeptide reads, in one-letter code: Allograft inflammatory factor 1-like (150 aa).

Position 2 is an N-acetylserine (S2). S2 bears the Phosphoserine mark. In terms of domain architecture, EF-hand 1 spans 47–82 (EKLAAFKEKYMEFDLNNEGEIDLMSLKRMMEKLGVP). Ca(2+) is bound by residues D60, N62, E64, and E66. Positions 83–117 (KTHLEMKKMISEVTGGVSDTISYRDFVNMMLGKRS) constitute an EF-hand 2; degenerate domain. Residues 129 to 150 (KANESSPKPAGPPPERDIASLP) are disordered. A Phosphoserine modification is found at S134.

In terms of assembly, homodimer (Potential). Monomer.

The protein localises to the cytoplasm. It is found in the cytoskeleton. The protein resides in the cell projection. It localises to the ruffle membrane. Functionally, actin-binding protein that promotes actin bundling. May neither bind calcium nor depend on calcium for function. The chain is Allograft inflammatory factor 1-like (Aif1l) from Mus musculus (Mouse).